Here is a 278-residue protein sequence, read N- to C-terminus: Small ribosomal subunit protein uS2 (278 aa).

Residues 233 to 257 (IDMEAAGEAPANKGKKKSVKARLDK) form a disordered region.

Belongs to the universal ribosomal protein uS2 family.

The polypeptide is Small ribosomal subunit protein uS2 (Bacteroides thetaiotaomicron (strain ATCC 29148 / DSM 2079 / JCM 5827 / CCUG 10774 / NCTC 10582 / VPI-5482 / E50)).